The chain runs to 83 residues: Toxin BmKBT (83 aa).

The signal sequence occupies residues 1–19 (MKAALLLVIFSLMLIGVLT). One can recognise an LCN-type CS-alpha/beta domain in the interval 21-81 (KSGYPTDHEG…TWSRATNKCR (61 aa)). 4 cysteine pairs are disulfide-bonded: Cys-31/Cys-80, Cys-35/Cys-54, Cys-41/Cys-61, and Cys-45/Cys-63. A propeptide (removed by a carboxypeptidase) is located at residue Lys-83.

This sequence belongs to the long (4 C-C) scorpion toxin superfamily. Sodium channel inhibitor family. Beta subfamily. As to expression, expressed by the venom gland.

It is found in the secreted. Its function is as follows. This toxin increases the peak sodium current, slows down the inactivation of sodium channels (Nav), and prolongs the action potential of dorsal root ganglion neurons, which indicates that it behaves as a classical alpha-toxin. It binds to mammal brain and insect sodium channels, but with a different manner. This peptide may bind to a distinct receptor site on mammal brain sodium channels, which is unconnected with that for BmKAS (a beta-toxin), BmKIT2 (a beta-toxin) or BmK I (an alpha toxin). In contrast, the receptor site for BmKabT on insect sodium channels might be closely related to that for the beta-insect depressant toxin BmKIT2. Possesses potent toxicity in mice but induces only paralysis in cotton bollworm. The polypeptide is Toxin BmKBT (Olivierus martensii (Manchurian scorpion)).